The chain runs to 514 residues: Na(+)/H(+) antiporter NhaB (514 aa).

12 helical membrane-spanning segments follow: residues 23-43 (LALL…PFVA), 63-83 (PLLP…TSAA), 97-117 (LLLM…LFIF), 120-140 (LLLS…AAAF), 144-164 (FLDA…FYGI), 202-222 (LMMH…VGEP), 238-258 (FFLR…LTCM), 303-323 (AVIG…VGLI), 357-377 (LTVF…APII), 391-411 (LFYL…VGTI), 447-467 (ATPN…APLI), and 475-495 (VWMA…CVEF).

Belongs to the NhaB Na(+)/H(+) (TC 2.A.34) antiporter family.

The protein localises to the cell inner membrane. It carries out the reaction 2 Na(+)(in) + 3 H(+)(out) = 2 Na(+)(out) + 3 H(+)(in). Its function is as follows. Na(+)/H(+) antiporter that extrudes sodium in exchange for external protons. This is Na(+)/H(+) antiporter NhaB from Salmonella agona (strain SL483).